Here is a 1121-residue protein sequence, read N- to C-terminus: uncharacterized protein (1121 aa).

The segment at 179 to 198 (GPGECQSVHNQSSGSGSNSY) is disordered. N-linked (GlcNAc...) asparagine; by host glycans are attached at residues N188, N325, N351, N449, N561, and N615. Disordered stretches follow at residues 649 to 684 (KRIH…RIHN) and 701 to 734 (STRQ…TDSD). The segment covering 701–715 (STRQDASGGSSSGTK) has biased composition (polar residues). N-linked (GlcNAc...) asparagine; by host glycans are attached at residues N838, N911, N914, and N980.

Belongs to the herpesviridae US22 family.

This is an uncharacterized protein from Homo sapiens (Human).